Reading from the N-terminus, the 628-residue chain is DNA mismatch repair protein MutL (628 aa).

The segment at 334-367 is disordered; sequence SDFAQPSADNMPKPESPGAPAAHGRKDDAPAAHA. The span at 357 to 367 shows a compositional bias: basic and acidic residues; that stretch reads GRKDDAPAAHA.

It belongs to the DNA mismatch repair MutL/HexB family.

Its function is as follows. This protein is involved in the repair of mismatches in DNA. It is required for dam-dependent methyl-directed DNA mismatch repair. May act as a 'molecular matchmaker', a protein that promotes the formation of a stable complex between two or more DNA-binding proteins in an ATP-dependent manner without itself being part of a final effector complex. The sequence is that of DNA mismatch repair protein MutL from Opitutus terrae (strain DSM 11246 / JCM 15787 / PB90-1).